The chain runs to 603 residues: Proline--tRNA ligase (603 aa).

The protein belongs to the class-II aminoacyl-tRNA synthetase family. ProS type 1 subfamily. In terms of assembly, homodimer.

It is found in the cytoplasm. It catalyses the reaction tRNA(Pro) + L-proline + ATP = L-prolyl-tRNA(Pro) + AMP + diphosphate. Catalyzes the attachment of proline to tRNA(Pro) in a two-step reaction: proline is first activated by ATP to form Pro-AMP and then transferred to the acceptor end of tRNA(Pro). As ProRS can inadvertently accommodate and process non-cognate amino acids such as alanine and cysteine, to avoid such errors it has two additional distinct editing activities against alanine. One activity is designated as 'pretransfer' editing and involves the tRNA(Pro)-independent hydrolysis of activated Ala-AMP. The other activity is designated 'posttransfer' editing and involves deacylation of mischarged Ala-tRNA(Pro). The misacylated Cys-tRNA(Pro) is not edited by ProRS. The sequence is that of Proline--tRNA ligase from Arthrobacter sp. (strain FB24).